Reading from the N-terminus, the 1403-residue chain is E3 ubiquitin-protein ligase SNT2 (1403 aa).

Residues 40–62 (SGAKTKGSNSQTPRNCKRTSNPA) form a disordered region. Positions 45–62 (KGSNSQTPRNCKRTSNPA) are enriched in polar residues. The 138-residue stretch at 121–258 (VLLSANDTIY…RYTLKYYKVY (138 aa)) folds into the BAH domain. The segment at 317-369 (DKRCQFCKEWCIQKESLSCDECGVCAHLYCMDPPLDRKPNKDVVWTCFSCLQK) adopts a PHD-type 1 zinc-finger fold. The SANT domain occupies 555–606 (LKEPSFTAVEIRKFEEAVEKFGSELRPVCEYVGTQPMSMIVRFYYNWKKTER). The segment at 1038–1097 (RTFCSVCKEKFNDNDNYEVVCGNCGLTVHYFCYAIKLPKDMKKNTNLKTFKWLCDPCSND) adopts a PHD-type 2 zinc-finger fold. The RING-type; degenerate zinc-finger motif lies at 1041 to 1095 (CSVCKEKFNDNDNYEVVCGNCGLTVHYFCYAIKLPKDMKKNTNLKTFKWLCDPCS). The C2HC pre-PHD-type zinc finger occupies 1105–1153 (TYQCSMCPTKDYDYDRYRSQSFKICPDALKCTSLGTWVHLVCSLFNEDI). A PHD-type 3; degenerate zinc finger spans residues 1177 to 1231 (FTCGVCRINGGGLVKCNKCQYRYHITCAQNSSNFKLMFEKKNMSVDTTLPCIKDV).

In terms of assembly, component of the Snt2C complex composed of SNT2, ECM5 and RPD3. Interacts with the E2 ubiquitin-conjugating enzyme UBC4 and histones H3 and H4. Binding is enhanced to methylated histone H3K36me3.

It localises to the cytoplasm. The protein resides in the nucleus. It catalyses the reaction S-ubiquitinyl-[E2 ubiquitin-conjugating enzyme]-L-cysteine + [acceptor protein]-L-lysine = [E2 ubiquitin-conjugating enzyme]-L-cysteine + N(6)-ubiquitinyl-[acceptor protein]-L-lysine.. In terms of biological role, transcriptional regulator that, together with ECM5, recruits histone deacetylase RPD3 to a small number of promoters of stress-response genes in response to oxidative stress. Probable ubiquitin-protein ligase involved in the degradation-related ubiquitination of histones. Contributes to the post-translational regulation of histone protein levels by polyubiquitination of excess histones for subsequent degradation. This chain is E3 ubiquitin-protein ligase SNT2, found in Saccharomyces cerevisiae (strain ATCC 204508 / S288c) (Baker's yeast).